Reading from the N-terminus, the 351-residue chain is CCN family member 3 (351 aa).

A signal peptide spans 1–21 (MSVFLRKQCLCLGFLLLHLLN). Residues 25–99 (ATLRCPSRCP…NNETGICMVP (75 aa)) enclose the IGFBP N-terminal domain. Disulfide bonds link C29/C55, C33/C57, C37/C58, C44/C61, C69/C83, and C75/C96. N-linked (GlcNAc...) asparagine glycosylation occurs at N91. The 67-residue stretch at 102-168 (DNCVFDGVIY…GECCEKWTCG (67 aa)) folds into the VWFC domain. The TSP type-1 domain occupies 199–244 (NCIEQTTEWSACSKSCGMGLSTRVTNRNLQCEMVKQTRLCMVRPCE). Residue C238 is the site of S-palmitoyl cysteine attachment. 5 disulfides stabilise this stretch: C258/C295, C275/C309, C286/C325, C289/C327, and C294/C331. In terms of domain architecture, CTCK spans 258–332 (CLRTKKSLKS…GTCTCHSNCP (75 aa)). N-linked (GlcNAc...) asparagine glycosylation is present at N274.

The protein belongs to the CCN family. In terms of assembly, interacts with FBLN1. Interacts (via CTCK domain) with NOTCH1 (via the EGF-like repeat region). Interacts with GJA1/CX43. Interacts with ITGA5:ITGB1, ITGAV:ITGB3 and ITGAV:ITGB5. Interacts with ZDHHC22; the interaction may lead to CCN3 palmitoylation. May be palmitoylated on Cys-238, which is important for extracellular secretion. In terms of tissue distribution, widely expressed. Highly expressed in neurons of dorsal root ganglia and dorsal horn of the spinal cord (at protein level). Expressed in astrocytes (at protein level). In cartilage, dominantly expressed in the chondrocyte territorial matrix.

The protein resides in the secreted. The protein localises to the cytoplasm. It localises to the cell junction. It is found in the gap junction. In terms of biological role, immediate-early protein playing a role in various cellular processes including proliferation, adhesion, migration, differentiation and survival. Acts by binding to integrins or membrane receptors such as NOTCH1. Essential regulator of hematopoietic stem and progenitor cell function. Inhibits myogenic differentiation through the activation of Notch-signaling pathway. Inhibits vascular smooth muscle cells proliferation by increasing expression of cell-cycle regulators such as CDKN2B or CDKN1A independently of TGFB1 signaling. Ligand of integrins ITGAV:ITGB3 and ITGA5:ITGB1, acts directly upon endothelial cells to stimulate pro-angiogenic activities and induces angiogenesis. In endothelial cells, supports cell adhesion, induces directed cell migration (chemotaxis) and promotes cell survival. Also plays a role in cutaneous wound healing acting as integrin receptor ligand. Supports skin fibroblast adhesion through ITGA5:ITGB1 and ITGA6:ITGB1 and induces fibroblast chemotaxis through ITGAV:ITGB5. Seems to enhance bFGF-induced DNA synthesis in fibroblasts. Involved in bone regeneration as a negative regulator. Enhances the articular chondrocytic phenotype, whereas it repressed the one representing endochondral ossification. Impairs pancreatic beta-cell function, inhibits beta-cell proliferation and insulin secretion. Plays a role as negative regulator of endothelial pro-inflammatory activation reducing monocyte adhesion, its anti-inflammatory effects occur secondary to the inhibition of NF-kappaB signaling pathway. Contributes to the control and coordination of inflammatory processes in atherosclerosis. Attenuates inflammatory pain through regulation of IL1B- and TNF-induced MMP9, MMP2 and CCL2 expression. Inhibits MMP9 expression through ITGB1 engagement. Brain osteoanabolic hormone. During lactation, maintains the maternal skeleton and viability of offspring. The sequence is that of CCN family member 3 (Ccn3) from Rattus norvegicus (Rat).